The chain runs to 429 residues: Phosphomethylpyrimidine synthase (429 aa).

Substrate contacts are provided by residues asparagine 66, methionine 95, tyrosine 124, histidine 163, 185–187 (SRG), 226–229 (DGLR), and glutamate 265. Histidine 269 provides a ligand contact to Zn(2+). Tyrosine 292 lines the substrate pocket. Residue histidine 333 coordinates Zn(2+). Residues cysteine 407, cysteine 410, and cysteine 414 each coordinate [4Fe-4S] cluster.

The protein belongs to the ThiC family. [4Fe-4S] cluster is required as a cofactor.

The enzyme catalyses 5-amino-1-(5-phospho-beta-D-ribosyl)imidazole + S-adenosyl-L-methionine = 4-amino-2-methyl-5-(phosphooxymethyl)pyrimidine + CO + 5'-deoxyadenosine + formate + L-methionine + 3 H(+). The protein operates within cofactor biosynthesis; thiamine diphosphate biosynthesis. Catalyzes the synthesis of the hydroxymethylpyrimidine phosphate (HMP-P) moiety of thiamine from aminoimidazole ribotide (AIR) in a radical S-adenosyl-L-methionine (SAM)-dependent reaction. In Pyrococcus furiosus (strain ATCC 43587 / DSM 3638 / JCM 8422 / Vc1), this protein is Phosphomethylpyrimidine synthase.